The sequence spans 210 residues: MADS-box protein AeAP3-2 (210 aa).

The region spanning 1 to 36 is the MADS-box domain; it reads GGLLKKARELAILCDAQLGVIIFSSSGKMFEFSSPP. Residues 59–149 enclose the K-box domain; sequence NQQVYCEITR…YRVIQDHHAA (91 aa).

In terms of tissue distribution, expressed exclusively in the carpel.

It localises to the nucleus. Probable transcription factor. The protein is MADS-box protein AeAP3-2 (AP3-2) of Asarum europaeum (Asarabacca).